The following is a 298-amino-acid chain: uncharacterized protein (298 aa).

In terms of domain architecture, HTH lysR-type spans 5-62; sequence TSLSAMRIFEAAARLGSFRAAAEELNLSPSAVSHAIMRLERDLGVALFERTTRSVSLT. Residues 22–42 constitute a DNA-binding region (H-T-H motif); it reads FRAAAEELNLSPSAVSHAIMR.

Belongs to the LysR transcriptional regulatory family.

This is an uncharacterized protein from Sinorhizobium fredii (strain NBRC 101917 / NGR234).